A 281-amino-acid polypeptide reads, in one-letter code: NADPH-dependent 7-cyano-7-deazaguanine reductase (281 aa).

87-89 (IES) provides a ligand contact to substrate. Residue 89-90 (SK) coordinates NADPH. Cysteine 188 functions as the Thioimide intermediate in the catalytic mechanism. Aspartate 195 functions as the Proton donor in the catalytic mechanism. 227–228 (HE) contributes to the substrate binding site. Position 256–257 (256–257 (RG)) interacts with NADPH. The tract at residues 261–281 (INPYRSTEQDKPAHNHRMARQ) is disordered.

It belongs to the GTP cyclohydrolase I family. QueF type 2 subfamily. In terms of assembly, homodimer.

The protein resides in the cytoplasm. The catalysed reaction is 7-aminomethyl-7-carbaguanine + 2 NADP(+) = 7-cyano-7-deazaguanine + 2 NADPH + 3 H(+). The protein operates within tRNA modification; tRNA-queuosine biosynthesis. Functionally, catalyzes the NADPH-dependent reduction of 7-cyano-7-deazaguanine (preQ0) to 7-aminomethyl-7-deazaguanine (preQ1). The protein is NADPH-dependent 7-cyano-7-deazaguanine reductase of Vibrio parahaemolyticus serotype O3:K6 (strain RIMD 2210633).